The following is a 471-amino-acid chain: Abscission/NoCut checkpoint regulator (471 aa).

The interval 39-64 (GGAGQGREGRSWGEGPRGPGLGRRDL) is disordered. The segment at 74-133 (ATMESRCYGCAVKFTLFKKEYGCKNCGRAFCSGCLSFSAAVPRTGNTQQKVCKQCHEVLT) adopts an FYVE-type zinc-finger fold. The Zn(2+) site is built by Cys-80, Cys-83, Cys-96, Cys-99, Cys-104, Cys-107, Cys-125, and Cys-128. Ser-144 is subject to Phosphoserine. The MIM1-A motif lies at 174-187 (DQMIAERLARLRQE). A Glycyl lysine isopeptide (Lys-Gly) (interchain with G-Cter in SUMO2) cross-link involves residue Lys-207. Thr-243 carries the phosphothreonine modification. The disordered stretch occupies residues 271–299 (KGGGPAASLQNDLNQGGPGSTNSKRQANW). Polar residues predominate over residues 278 to 299 (SLQNDLNQGGPGSTNSKRQANW). A phosphoserine mark is found at Gly-286 and Ser-293. Positions 311-375 (EAALELREEN…RVLQQLTEEA (65 aa)) form a coiled coil. The short motif at 326 to 339 (ILALAKRLAMLRGQ) is the MIM1-B element. Residue Ser-354 is modified to Phosphoserine. Positions 386–412 (PAEQASRPWTQPRGAEPEAQDVDPRPE) are disordered. A Phosphoserine modification is found at Ser-463.

Interacts (via MIM1-B) with VPS4A; interaction takes place at the midbody ring following cytokinesis checkpoint activation. In terms of processing, phosphorylated in vitro at Ser-22 by AURKB; however, phosphorylation at this site could not be confirmed in vivo. As to expression, detected in brain, heart, skeletal muscle and kidney. Expressed in the liver (at protein level).

The protein resides in the cytoplasm. The protein localises to the cytoskeleton. Its subcellular location is the microtubule organizing center. It is found in the centrosome. It localises to the cleavage furrow. The protein resides in the midbody. The protein localises to the midbody ring. In terms of biological role, key regulator of abscission step in cytokinesis: part of the cytokinesis checkpoint, a process required to delay abscission to prevent both premature resolution of intercellular chromosome bridges and accumulation of DNA damage. Together with CHMP4C, required to retain abscission-competent VPS4 (VPS4A and/or VPS4B) at the midbody ring until abscission checkpoint signaling is terminated at late cytokinesis. Deactivation of AURKB results in dephosphorylation of CHMP4C followed by its dissociation from ZFYVE19/ANCHR and VPS4 and subsequent abscission. The chain is Abscission/NoCut checkpoint regulator (ZFYVE19) from Homo sapiens (Human).